Here is a 256-residue protein sequence, read N- to C-terminus: Protein crossbronx-like (256 aa).

Positions 17-179 (NQGYKVLAEY…AKVSILWSCQ (163 aa)) constitute a UBC core domain.

It belongs to the ubiquitin-conjugating enzyme family. FTS subfamily.

The sequence is that of Protein crossbronx-like from Drosophila virilis (Fruit fly).